Here is a 361-residue protein sequence, read N- to C-terminus: UDP-N-acetylglucosamine--N-acetylmuramyl-(pentapeptide) pyrophosphoryl-undecaprenol N-acetylglucosamine transferase (361 aa).

Residues Thr12 to Gly14, Asn124, Arg163, Ser189, Ile241, Ala260 to Glu265, and Gln286 contribute to the UDP-N-acetyl-alpha-D-glucosamine site.

It belongs to the glycosyltransferase 28 family. MurG subfamily.

Its subcellular location is the cell inner membrane. The catalysed reaction is di-trans,octa-cis-undecaprenyl diphospho-N-acetyl-alpha-D-muramoyl-L-alanyl-D-glutamyl-meso-2,6-diaminopimeloyl-D-alanyl-D-alanine + UDP-N-acetyl-alpha-D-glucosamine = di-trans,octa-cis-undecaprenyl diphospho-[N-acetyl-alpha-D-glucosaminyl-(1-&gt;4)]-N-acetyl-alpha-D-muramoyl-L-alanyl-D-glutamyl-meso-2,6-diaminopimeloyl-D-alanyl-D-alanine + UDP + H(+). It participates in cell wall biogenesis; peptidoglycan biosynthesis. In terms of biological role, cell wall formation. Catalyzes the transfer of a GlcNAc subunit on undecaprenyl-pyrophosphoryl-MurNAc-pentapeptide (lipid intermediate I) to form undecaprenyl-pyrophosphoryl-MurNAc-(pentapeptide)GlcNAc (lipid intermediate II). This chain is UDP-N-acetylglucosamine--N-acetylmuramyl-(pentapeptide) pyrophosphoryl-undecaprenol N-acetylglucosamine transferase, found in Aeromonas hydrophila subsp. hydrophila (strain ATCC 7966 / DSM 30187 / BCRC 13018 / CCUG 14551 / JCM 1027 / KCTC 2358 / NCIMB 9240 / NCTC 8049).